The chain runs to 577 residues: Arginine--tRNA ligase (577 aa).

The 'HIGH' region motif lies at 132–142; the sequence is ANPTGPLHVGH.

Belongs to the class-I aminoacyl-tRNA synthetase family. Monomer.

It localises to the cytoplasm. It catalyses the reaction tRNA(Arg) + L-arginine + ATP = L-arginyl-tRNA(Arg) + AMP + diphosphate. This is Arginine--tRNA ligase from Pelagibacter ubique (strain HTCC1062).